Consider the following 704-residue polypeptide: Ion-translocating oxidoreductase complex subunit C (704 aa).

4Fe-4S ferredoxin-type domains are found at residues 368–397 (MGAP…QQLY) and 407–436 (KATA…VQYF). 8 residues coordinate [4Fe-4S] cluster: Cys377, Cys380, Cys383, Cys387, Cys416, Cys419, Cys422, and Cys426. A disordered region spans residues 536 to 684 (RAKQAAHPMA…PADPRKAAVA (149 aa)). Over residues 556–565 (KAAVEAAIAR) the composition is skewed to low complexity.

This sequence belongs to the 4Fe4S bacterial-type ferredoxin family. RnfC subfamily. The complex is composed of six subunits: RsxA, RsxB, RsxC, RsxD, RsxE and RsxG. It depends on [4Fe-4S] cluster as a cofactor.

The protein resides in the cell inner membrane. Its function is as follows. Part of a membrane-bound complex that couples electron transfer with translocation of ions across the membrane. Required to maintain the reduced state of SoxR. This Salmonella choleraesuis (strain SC-B67) protein is Ion-translocating oxidoreductase complex subunit C.